A 903-amino-acid chain; its full sequence is Translation initiation factor IF-2 (903 aa).

The tract at residues 66–296 is disordered; the sequence is QATLKGEGPV…GRSRKREMEN (231 aa). The span at 121–132 shows a compositional bias: basic and acidic residues; the sequence is NTDETRVQEHKP. 2 stretches are compositionally biased toward low complexity: residues 139 to 152 and 178 to 195; these read AGDA…AAAG and AATG…GQQS. The segment covering 204 to 231 has biased composition (basic and acidic residues); the sequence is EGRSRQDENKGSAREDQANRFATRDKEA. Positions 246-255 are enriched in basic residues; sequence RRPAHSKPLR. Basic and acidic residues-rich tracts occupy residues 263–276 and 285–296; these read VTKD…DRSN and ESGRSRKREMEN. Residues 403 to 572 form the tr-type G domain; it reads ERPPVVTVMG…LLTADVAELK (170 aa). The G1 stretch occupies residues 412–419; sequence GHVDHGKT. GTP is bound at residue 412 to 419; sequence GHVDHGKT. The interval 437 to 441 is G2; it reads GITQH. Residues 458–461 form a G3 region; sequence DTPG. GTP contacts are provided by residues 458-462 and 512-515; these read DTPGH and NKID. The interval 512–515 is G4; that stretch reads NKID. A G5 region spans residues 548 to 550; the sequence is SAV.

The protein belongs to the TRAFAC class translation factor GTPase superfamily. Classic translation factor GTPase family. IF-2 subfamily.

It is found in the cytoplasm. Functionally, one of the essential components for the initiation of protein synthesis. Protects formylmethionyl-tRNA from spontaneous hydrolysis and promotes its binding to the 30S ribosomal subunits. Also involved in the hydrolysis of GTP during the formation of the 70S ribosomal complex. This is Translation initiation factor IF-2 from Moorella thermoacetica (strain ATCC 39073 / JCM 9320).